Consider the following 334-residue polypeptide: Anthranilate phosphoribosyltransferase (334 aa).

5-phospho-alpha-D-ribose 1-diphosphate is bound by residues Gly-79, 82 to 83, Ser-87, 89 to 92, 107 to 115, and Ser-119; these read GD, NIST, and KAGNRSISS. Residue Gly-79 coordinates anthranilate. Ser-91 provides a ligand contact to Mg(2+). An anthranilate-binding site is contributed by Asn-110. Arg-165 is a binding site for anthranilate. Mg(2+) contacts are provided by Asp-224 and Glu-225.

The protein belongs to the anthranilate phosphoribosyltransferase family. Homodimer. Mg(2+) is required as a cofactor.

It carries out the reaction N-(5-phospho-beta-D-ribosyl)anthranilate + diphosphate = 5-phospho-alpha-D-ribose 1-diphosphate + anthranilate. It participates in amino-acid biosynthesis; L-tryptophan biosynthesis; L-tryptophan from chorismate: step 2/5. In terms of biological role, catalyzes the transfer of the phosphoribosyl group of 5-phosphorylribose-1-pyrophosphate (PRPP) to anthranilate to yield N-(5'-phosphoribosyl)-anthranilate (PRA). This chain is Anthranilate phosphoribosyltransferase, found in Streptococcus thermophilus (strain ATCC BAA-250 / LMG 18311).